Reading from the N-terminus, the 287-residue chain is Protoheme IX farnesyltransferase (287 aa).

The next 7 membrane-spanning stretches (helical) occupy residues 19-39 (LMVA…VTIT), 100-120 (MVLC…IVAV), 134-154 (FALL…WLAV), 162-182 (MLVV…WLHA), 212-232 (VWFH…LLEG), 233-253 (VGMR…AMLA), and 267-287 (VLCA…VSLF).

It belongs to the UbiA prenyltransferase family. Protoheme IX farnesyltransferase subfamily.

It is found in the cell inner membrane. It catalyses the reaction heme b + (2E,6E)-farnesyl diphosphate + H2O = Fe(II)-heme o + diphosphate. It participates in porphyrin-containing compound metabolism; heme O biosynthesis; heme O from protoheme: step 1/1. In terms of biological role, converts heme B (protoheme IX) to heme O by substitution of the vinyl group on carbon 2 of heme B porphyrin ring with a hydroxyethyl farnesyl side group. This chain is Protoheme IX farnesyltransferase, found in Nitratidesulfovibrio vulgaris (strain DP4) (Desulfovibrio vulgaris).